A 57-amino-acid polypeptide reads, in one-letter code: Large ribosomal subunit protein uL30 (57 aa).

The protein belongs to the universal ribosomal protein uL30 family. Part of the 50S ribosomal subunit.

This Clostridium perfringens (strain ATCC 13124 / DSM 756 / JCM 1290 / NCIMB 6125 / NCTC 8237 / Type A) protein is Large ribosomal subunit protein uL30.